Consider the following 408-residue polypeptide: Arylacetamide deacetylase-like 3 (408 aa).

The next 3 helical transmembrane spans lie at 2 to 22 (VVLA…GSLL), 46 to 66 (ILSC…KLGL), and 109 to 129 (SSIP…IGSL). The short motif at 120–122 (HGG) is the Involved in the stabilization of the negatively charged intermediate by the formation of the oxyanion hole element. Serine 194 is an active-site residue. An N-linked (GlcNAc...) asparagine glycan is attached at asparagine 321. Active-site residues include aspartate 348 and histidine 378.

This sequence belongs to the 'GDXG' lipolytic enzyme family.

The protein localises to the membrane. The chain is Arylacetamide deacetylase-like 3 (Aadacl3) from Mus musculus (Mouse).